Here is a 190-residue protein sequence, read N- to C-terminus: Protein LZIC (190 aa).

Residues 6–64 adopt a coiled-coil conformation; the sequence is TTETSKLKQNLEEQLDRLMQQLQDLEECREELDADEYEETKKETLEQLSEINDSLKKIM.

The protein belongs to the CTNNBIP1 family. In terms of assembly, does not interact with CTNNB1.

This chain is Protein LZIC (LZIC), found in Gallus gallus (Chicken).